We begin with the raw amino-acid sequence, 154 residues long: Protein X (154 aa).

Residues 68–117 are mitochondrial targeting sequence; the sequence is PCALRFTSARRMETTVNAPQSLPTTLHKRTLGLSPRSTTWIEEYIKDCVF.

The protein belongs to the orthohepadnavirus protein X family. In terms of assembly, may form homodimer. May interact with host CEBPA, CFLAR, CREB1, DDB1, E4F1, HBXIP, HSPD1/HSP60, NFKBIA, POLR2E and SMAD4. Interacts with host SMC5-SMC6 complex and induces its degradation. Interacts with host TRPC4AP; leading to prevent ubiquitination of TRPC4AP. Interacts with host PLSCR1; this interaction promotes ubiquitination and degradation of HBx and impairs HBx-mediated cell proliferation. A fraction may be phosphorylated in insect cells and HepG2 cells, a human hepatoblastoma cell line. Phosphorylated in vitro by host protein kinase C or mitogen-activated protein kinase. N-acetylated in insect cells.

The protein localises to the host cytoplasm. It localises to the host nucleus. The protein resides in the host mitochondrion. Functionally, multifunctional protein that plays a role in silencing host antiviral defenses and promoting viral transcription. Does not seem to be essential for HBV infection. May be directly involved in development of cirrhosis and liver cancer (hepatocellular carcinoma). Most of cytosolic activities involve modulation of cytosolic calcium. The effect on apoptosis is controversial depending on the cell types in which the studies have been conducted. May induce apoptosis by localizing in mitochondria and causing loss of mitochondrial membrane potential. May also modulate apoptosis by binding host CFLAR, a key regulator of the death-inducing signaling complex (DISC). Promotes viral transcription by using the host E3 ubiquitin ligase DDB1 to target the SMC5-SMC6 complex to proteasomal degradation. This host complex would otherwise bind to viral episomal DNA, and prevents its transcription. Moderately stimulates transcription of many different viral and cellular transcription elements. Promoters and enhancers stimulated by HBx contain DNA binding sites for NF-kappa-B, AP-1, AP-2, c-EBP, ATF/CREB, or the calcium-activated factor NF-AT. This is Protein X from Hepatitis B virus genotype H subtype adw4 (isolate Nicaragua/2928Nic/1997) (HBV-H).